The chain runs to 268 residues: Imidazole glycerol phosphate synthase subunit HisF (268 aa).

Active-site residues include Asp12 and Asp131.

The protein belongs to the HisA/HisF family. Heterodimer of HisH and HisF.

The protein resides in the cytoplasm. It carries out the reaction 5-[(5-phospho-1-deoxy-D-ribulos-1-ylimino)methylamino]-1-(5-phospho-beta-D-ribosyl)imidazole-4-carboxamide + L-glutamine = D-erythro-1-(imidazol-4-yl)glycerol 3-phosphate + 5-amino-1-(5-phospho-beta-D-ribosyl)imidazole-4-carboxamide + L-glutamate + H(+). It functions in the pathway amino-acid biosynthesis; L-histidine biosynthesis; L-histidine from 5-phospho-alpha-D-ribose 1-diphosphate: step 5/9. In terms of biological role, IGPS catalyzes the conversion of PRFAR and glutamine to IGP, AICAR and glutamate. The HisF subunit catalyzes the cyclization activity that produces IGP and AICAR from PRFAR using the ammonia provided by the HisH subunit. The polypeptide is Imidazole glycerol phosphate synthase subunit HisF (Salinibacter ruber (strain DSM 13855 / M31)).